A 506-amino-acid chain; its full sequence is Kynureninase 1 (506 aa).

Pyridoxal 5'-phosphate contacts are provided by residues Leu141, Thr142, 169–172, Asp254, His257, and Tyr279; that span reads FPSD. The residue at position 280 (Lys280) is an N6-(pyridoxal phosphate)lysine. Over residues 303–319 the composition is skewed to low complexity; it reads ETAPTTTPDGTNGNPKT. The disordered stretch occupies residues 303-322; it reads ETAPTTTPDGTNGNPKTISD. Pyridoxal 5'-phosphate contacts are provided by Trp334 and Asn362.

It belongs to the kynureninase family. In terms of assembly, homodimer. It depends on pyridoxal 5'-phosphate as a cofactor.

It localises to the cytoplasm. It carries out the reaction L-kynurenine + H2O = anthranilate + L-alanine + H(+). The enzyme catalyses 3-hydroxy-L-kynurenine + H2O = 3-hydroxyanthranilate + L-alanine + H(+). The protein operates within amino-acid degradation; L-kynurenine degradation; L-alanine and anthranilate from L-kynurenine: step 1/1. Its pathway is cofactor biosynthesis; NAD(+) biosynthesis; quinolinate from L-kynurenine: step 2/3. Catalyzes the cleavage of L-kynurenine (L-Kyn) and L-3-hydroxykynurenine (L-3OHKyn) into anthranilic acid (AA) and 3-hydroxyanthranilic acid (3-OHAA), respectively. This chain is Kynureninase 1, found in Phaeosphaeria nodorum (strain SN15 / ATCC MYA-4574 / FGSC 10173) (Glume blotch fungus).